The primary structure comprises 118 residues: Probable mitochondrial pyruvate carrier 2 (118 aa).

3 consecutive transmembrane segments (helical) span residues 19 to 35 (VHFW…LSGI), 50 to 66 (YAAL…WSLI), and 72 to 94 (YFNA…RILV).

The protein belongs to the mitochondrial pyruvate carrier (MPC) (TC 2.A.105) family. As to quaternary structure, the functional 150 kDa pyruvate import complex is a heteromer of mpc1 and mpc2.

It localises to the mitochondrion inner membrane. Its function is as follows. Mediates the uptake of pyruvate into mitochondria. The polypeptide is Probable mitochondrial pyruvate carrier 2 (Schizosaccharomyces pombe (strain 972 / ATCC 24843) (Fission yeast)).